The primary structure comprises 340 residues: Protein LSM14 homolog car-1 (340 aa).

The 81-residue stretch at 1-81 (MSNQTPYIGS…IKDLIVCDTP (81 aa)) folds into the Sm domain. Positions 101 to 125 (SRSAPASDGAPAASAGSSRAGTPSR) are enriched in low complexity. The tract at residues 101-148 (SRSAPASDGAPAASAGSSRAGTPSRNSPLGQIIQNQRPGRGGYQQNFQ) is disordered. Residues 126 to 148 (NSPLGQIIQNQRPGRGGYQQNFQ) are compositionally biased toward polar residues. The DFDF domain occupies 178 to 214 (VNHREKLKFESDFDFEKANEKFQEVLVDNLEKLNIED). The FFD box motif lies at 227–243 (AFYDKKTSFFDNISCES). Residues 251-271 (TGRPDWKKERETNQETFGHNA) carry the TFG box motif. The segment at 277–340 (YRRGFGGRGR…QGNTAAAAEQ (64 aa)) is disordered. The segment covering 280–296 (GFGGRGRGGNRGYGGYN) has biased composition (gly residues). Low complexity predominate over residues 312–325 (GYRQNNGGYRRGGY).

It belongs to the LSM14 family.

It localises to the nucleus. Functionally, transcriptional regulator. Involved in modulating embryonic expression of ATP-dependent chaperone cdc-48.1. May play a role in mRNA gene silencing, and RNA granule (P-body) assembly. The polypeptide is Protein LSM14 homolog car-1 (Caenorhabditis elegans).